We begin with the raw amino-acid sequence, 211 residues long: Eukaryotic translation initiation factor 4E (211 aa).

Belongs to the eukaryotic initiation factor 4E family. As to quaternary structure, eIF4F is a multi-subunit complex, the composition of which varies with external and internal environmental conditions. It is composed of at least eIF4A, eIF4E and eIF4G. eIF4E is also known to interact with other partners.

Its function is as follows. Recognizes and binds the 7-methylguanosine-containing mRNA cap during an early step in the initiation of protein synthesis and facilitates ribosome binding by inducing the unwinding of the mRNAs secondary structures. The polypeptide is Eukaryotic translation initiation factor 4E (TIF45) (Eremothecium gossypii (strain ATCC 10895 / CBS 109.51 / FGSC 9923 / NRRL Y-1056) (Yeast)).